Here is a 130-residue protein sequence, read N- to C-terminus: Small ribosomal subunit protein uS9 (130 aa).

It belongs to the universal ribosomal protein uS9 family.

The sequence is that of Small ribosomal subunit protein uS9 from Thiobacillus denitrificans (strain ATCC 25259 / T1).